A 155-amino-acid chain; its full sequence is Histone H3-like centromeric protein hH3v (155 aa).

The span at 1–24 (MPPKKGGVTKSKAVSKKAAAVPTP) shows a compositional bias: low complexity. The tract at residues 1-56 (MPPKKGGVTKSKAVSKKAAAVPTPKATPPGRRKSRASSVQPGDPVPQGKKRRYRPG) is disordered. The H3-like stretch occupies residues 45-148 (VPQGKKRRYR…IQLARRIRGV (104 aa)).

Belongs to the histone H3 family. As to quaternary structure, component of centromeric nucleosomes, where DNA is wrapped around a histone octamer core. The octamer contains two molecules each of H2A, H2B, hH3v/CENPA and H4 assembled in one hH3v-H4 heterotetramer and two H2A-H2B heterodimers. Interacts with the inner kinetochore. Post-translationally, ubiquitinated. Is degraded through ubiquitin-mediated proteolysis when not protected by its association to the kinetochore.

The protein resides in the nucleus. It is found in the chromosome. Its subcellular location is the centromere. In terms of biological role, histone H3-like nucleosomal protein that is specifically found in centromeric nucleosomes. Replaces conventional H3 in the nucleosome core of centromeric chromatin that serves as an assembly site for the inner kinetochore. Required for recruitment and assembly of kinetochore proteins, mitotic progression and chromosome segregation. May serve as an epigenetic mark that propagates centromere identity through replication and cell division. The sequence is that of Histone H3-like centromeric protein hH3v (hH3v) from Neurospora crassa (strain ATCC 24698 / 74-OR23-1A / CBS 708.71 / DSM 1257 / FGSC 987).